We begin with the raw amino-acid sequence, 347 residues long: Nod factor export ATP-binding protein I (347 aa).

Basic and acidic residues predominate over residues 1–11 (MGENMEREMLR). The interval 1-32 (MGENMEREMLRPKTIAMDQNSASARSNPEREI) is disordered. Positions 17-26 (MDQNSASARS) are enriched in polar residues. In terms of domain architecture, ABC transporter spans 49–279 (IDLQAVTMIY…IIGCPVIEVY (231 aa)). 81–88 (GPNGAGKS) provides a ligand contact to ATP.

It belongs to the ABC transporter superfamily. Lipooligosaccharide exporter (TC 3.A.1.102) family. In terms of assembly, the complex is composed of two ATP-binding proteins (NodI) and two transmembrane proteins (NodJ).

It localises to the cell inner membrane. Its function is as follows. Part of the ABC transporter complex NodIJ involved in the export of the nodulation factors (Nod factors), the bacterial signal molecules that induce symbiosis and subsequent nodulation induction. Nod factors are LCO (lipo-chitin oligosaccharide), a modified beta-1,4-linked N-acetylglucosamine oligosaccharide. This subunit is responsible for energy coupling to the transport system. The polypeptide is Nod factor export ATP-binding protein I (Neorhizobium galegae (Rhizobium galegae)).